We begin with the raw amino-acid sequence, 264 residues long: Acyl-[acyl-carrier-protein]--UDP-N-acetylglucosamine O-acyltransferase (264 aa).

It belongs to the transferase hexapeptide repeat family. LpxA subfamily. In terms of assembly, homotrimer.

It localises to the cytoplasm. It carries out the reaction a (3R)-hydroxyacyl-[ACP] + UDP-N-acetyl-alpha-D-glucosamine = a UDP-3-O-[(3R)-3-hydroxyacyl]-N-acetyl-alpha-D-glucosamine + holo-[ACP]. It functions in the pathway glycolipid biosynthesis; lipid IV(A) biosynthesis; lipid IV(A) from (3R)-3-hydroxytetradecanoyl-[acyl-carrier-protein] and UDP-N-acetyl-alpha-D-glucosamine: step 1/6. Functionally, involved in the biosynthesis of lipid A, a phosphorylated glycolipid that anchors the lipopolysaccharide to the outer membrane of the cell. The sequence is that of Acyl-[acyl-carrier-protein]--UDP-N-acetylglucosamine O-acyltransferase from Rickettsia rickettsii.